The chain runs to 213 residues: Orotate phosphoribosyltransferase (213 aa).

Residue K26 coordinates 5-phospho-alpha-D-ribose 1-diphosphate. 34-35 (FF) is a binding site for orotate. Residues 72–73 (YK), R99, K100, K103, H105, and 124–132 (DDVITAGTA) each bind 5-phospho-alpha-D-ribose 1-diphosphate. Orotate is bound by residues T128 and R156.

It belongs to the purine/pyrimidine phosphoribosyltransferase family. PyrE subfamily. In terms of assembly, homodimer. The cofactor is Mg(2+).

The enzyme catalyses orotidine 5'-phosphate + diphosphate = orotate + 5-phospho-alpha-D-ribose 1-diphosphate. Its pathway is pyrimidine metabolism; UMP biosynthesis via de novo pathway; UMP from orotate: step 1/2. Catalyzes the transfer of a ribosyl phosphate group from 5-phosphoribose 1-diphosphate to orotate, leading to the formation of orotidine monophosphate (OMP). The sequence is that of Orotate phosphoribosyltransferase from Alteromonas mediterranea (strain DSM 17117 / CIP 110805 / LMG 28347 / Deep ecotype).